A 160-amino-acid polypeptide reads, in one-letter code: Sodium/proline symporter (160 aa).

2 helical membrane passes run 6–26 (PMLV…FIAW) and 68–88 (IFIS…GAWI).

It belongs to the sodium:solute symporter (SSF) (TC 2.A.21) family.

Its subcellular location is the cell inner membrane. The catalysed reaction is L-proline(in) + Na(+)(in) = L-proline(out) + Na(+)(out). Catalyzes the sodium-dependent uptake of extracellular L-proline. The polypeptide is Sodium/proline symporter (Klebsiella oxytoca).